Here is a 604-residue protein sequence, read N- to C-terminus: Netrin-1 (604 aa).

The N-terminal stretch at 1–24 is a signal peptide; it reads MMRAVWEALAALAAVACLVGAVRG. The Laminin N-terminal domain occupies 47-284; sequence HPRRCIPDFV…AVSDLQVGGR (238 aa). N95, N116, and N131 each carry an N-linked (GlcNAc...) asparagine glycan. Disulfide bonds link C119-C152, C285-C294, C287-C304, C306-C315, C318-C338, C341-C350, C343-C368, C371-C380, C383-C401, C404-C416, C406-C423, C425-C434, C437-C451, C472-C544, and C491-C601. Laminin EGF-like domains are found at residues 285-340, 341-403, and 404-453; these read CKCN…ECVA, CNCN…ACKA, and CDCH…PCIK. The N-linked (GlcNAc...) asparagine glycan is linked to N417. One can recognise an NTR domain in the interval 472-601; it reads CDSYCKASKG…FQQREKKGKC (130 aa). Residues 530–532 carry the Cell attachment site motif; it reads RGD.

In terms of assembly, binds to its receptors; DCC, UNC5A, UNC5B, UNC5C and probably UNC5D. Binds to its receptor; DSCAM. Interacts with DCC. Interacts with APP. Widely expressed in normal adult tissues with highest levels in heart, small intestine, colon, liver and prostate. Reduced expression in brain tumors and neuroblastomas. Expressed in epididymis (at protein level).

It is found in the secreted. It localises to the cytoplasm. Netrins control guidance of CNS commissural axons and peripheral motor axons. Its association with either DCC or some UNC5 receptors will lead to axon attraction or repulsion, respectively. Binding to UNC5C might cause dissociation of UNC5C from polymerized TUBB3 in microtubules and thereby lead to increased microtubule dynamics and axon repulsion. Involved in dorsal root ganglion axon projection towards the spinal cord. It also serves as a survival factor via its association with its receptors which prevent the initiation of apoptosis. Involved in tumorigenesis by regulating apoptosis. The chain is Netrin-1 (NTN1) from Homo sapiens (Human).